The primary structure comprises 943 residues: Coiled-coil and C2 domain-containing protein 1A (943 aa).

At threonine 91 the chain carries Phosphothreonine. 2 disordered regions span residues 186-250 (NEAD…CSPL) and 300-337 (DLSRLPPPPDQLSPEPPLPAAQPLTSASTLTRPEVPQP). Composition is skewed to low complexity over residues 195 to 206 (ASGKGAAAGHSH) and 229 to 238 (APSTTTPTSA). A Phosphoserine modification is found at serine 248. Residues 304–319 (LPPPPDQLSPEPPLPA) show a composition bias toward pro residues. Residues 339–385 (RNLLEALEQRMERYHVAAAQAKAKGDQRKARMHERIVKQYQDAIRAH) are a coiled coil. The segment at 430–483 (NHDEGSDDEEEETPKKQNTPAASTTQLKSSPSKAPPSGPAPAGKAAPKGTSNRA) is disordered. A Phosphoserine modification is found at serine 435. A compositionally biased stretch (polar residues) spans 445 to 456 (KQNTPAASTTQL). The segment covering 469–478 (APAGKAAPKG) has biased composition (low complexity). Residues 477–510 (KGTSNRAQQQLAFLEGRKKQLLQAALRAKQKNDV) adopt a coiled-coil conformation. Residues 630 to 764 (RFEQRTFSVI…ETACEVHEIL (135 aa)) enclose the C2 domain.

Belongs to the CC2D1 family. As to expression, highly expressed in brain, expression is enriched in the gray matter and strongest in the olfactory bulb.

It is found in the cytoplasm. It localises to the nucleus. Its subcellular location is the cytoskeleton. The protein localises to the microtubule organizing center. The protein resides in the centrosome. In terms of biological role, transcription factor that binds specifically to the DRE (dual repressor element) and represses HTR1A gene transcription in neuronal cells. The combination of calcium and ATP specifically inactivates the binding with FRE. May play a role in the altered regulation of HTR1A associated with anxiety and major depression. Mediates HDAC-independent repression of HTR1A promoter in neuronal cell. Performs essential function in controlling functional maturation of synapses. The chain is Coiled-coil and C2 domain-containing protein 1A (Cc2d1a) from Mus musculus (Mouse).